We begin with the raw amino-acid sequence, 640 residues long: Phosphatidylinositol-binding clathrin assembly protein (640 aa).

The residue at position 2 (Ser2) is an N-acetylserine. Residues 14–145 (QHSVTGSAVS…VSYRQVAFDF (132 aa)) enclose the ENTH domain. Phosphoserine is present on residues Ser16 and Ser20. The interaction with PIMREG stretch occupies residues 221–294 (KYFDMKKNQC…LEGKKIKDST (74 aa)). A Glycyl lysine isopeptide (Lys-Gly) (interchain with G-Cter in SUMO2) cross-link involves residue Lys238. Phosphoserine occurs at positions 303 and 315. Positions 543–568 (NGTTKNDVSCSQPGEKKLTGGSNWQP) are disordered. The segment covering 544-554 (GTTKNDVSCSQ) has biased composition (polar residues).

Belongs to the PICALM/SNAP91 family. Binds to clathrin; involves primarily the C-terminal sequences, but the full-length protein is required for full binding capacity. Binds phosphatidylinositol 4,5- bisphosphate. Interacts with PIMREG; this interaction may change the subcellular location into the nucleus. Interacts with AP2A1 (via its alpha-appendage domain). Interacts (via N-terminus) with VAMP2; VAMP3; VAMP7 and VAMP8 (Via N-terminus). Interacts with LC3/MAP1LC3A. In terms of tissue distribution, isoform 2 was found in most tissues examined. Isoform 1 has an overlapping expression pattern but is absent from lung, heart and pancreas. Both isoforms are widely expressed in the brain, higher levels are seen in hippocampus, dentate gyrus, medial habenula nucleus and cerebellar granule cells.

Its subcellular location is the cell membrane. The protein localises to the membrane. The protein resides in the clathrin-coated pit. It localises to the golgi apparatus. It is found in the cytoplasmic vesicle. Its subcellular location is the clathrin-coated vesicle. The protein localises to the nucleus. Cytoplasmic adapter protein that plays a critical role in clathrin-mediated endocytosis which is important in processes such as internalization of cell receptors, synaptic transmission or removal of apoptotic cells. Recruits AP-2 and attaches clathrin triskelions to the cytoplasmic side of plasma membrane leading to clathrin-coated vesicles (CCVs) assembly. Furthermore, regulates clathrin-coated vesicle size and maturation by directly sensing and driving membrane curvature. In addition to binding to clathrin, mediates the endocytosis of small R-SNARES (Soluble NSF Attachment Protein REceptors) between plasma membranes and endosomes including VAMP2, VAMP3, VAMP4, VAMP7 or VAMP8. In turn, PICALM-dependent SNARE endocytosis is required for the formation and maturation of autophagic precursors. Modulates thereby autophagy and the turnover of autophagy substrates such as MAPT/TAU or amyloid precursor protein cleaved C-terminal fragment (APP-CTF). The sequence is that of Phosphatidylinositol-binding clathrin assembly protein (Picalm) from Rattus norvegicus (Rat).